Consider the following 98-residue polypeptide: Integration host factor subunit alpha (98 aa).

The protein belongs to the bacterial histone-like protein family. Heterodimer of an alpha and a beta chain.

In terms of biological role, this protein is one of the two subunits of integration host factor, a specific DNA-binding protein that functions in genetic recombination as well as in transcriptional and translational control. The protein is Integration host factor subunit alpha of Actinobacillus pleuropneumoniae serotype 5b (strain L20).